Reading from the N-terminus, the 215-residue chain is Sodium channel regulatory subunit beta-3 (215 aa).

The signal sequence occupies residues 1–24 (MPAFNRLLPLASLVLIYWVRVCFP). The region spanning 25–138 (VCVEVPSETE…EAHRPFVKTT (114 aa)) is the Ig-like C2-type domain. At 25 to 156 (VCVEVPSETE…EEAGEDFTSV (132 aa)) the chain is on the extracellular side. Cystine bridges form between C26–C48 and C45–C120. 4 N-linked (GlcNAc...) asparagine glycosylation sites follow: N95, N109, N113, and N121. The helical transmembrane segment at 157–178 (VSEIMMYILLVFLTLWLFIEMI) threads the bilayer. Residues 179–215 (YCYRKVSKAEEAAQENASDYLAIPSENKENSVVPVEE) are Cytoplasmic-facing.

This sequence belongs to the sodium channel auxiliary subunit SCN3B (TC 8.A.17) family. As to quaternary structure, a voltage-gated sodium (Nav) channel consists of an ion-conducting pore-forming alpha subunit functional on its own that is regulated by one or more beta subunits. Forms homodimers and homotrimers. SCN3B is non-covalently associated with alpha subunits and induces the formation of alpha subunit oligomers, including trimers. Interacts with SCN5A/Nav1.5; regulatory subunit of SCN5A/Nav1.5. Interacts with SCN7A/Nav2.1; probable regulatory subunit of SCN7A/Nav2.1. Interacts with SCN10A; regulatory subunit of SCN10A/Nav1.8. Interacts with NFASC; probably involved in targeting the sodium channels to the nodes of Ranvier. In terms of processing, intramolecular disulfide bonds favor the voltage-gated sodium channel oligomeric complex assembly. Post-translationally, N-glycosylated.

The protein localises to the cell membrane. In terms of biological role, regulatory subunit of multiple voltage-gated sodium (Nav) channels directly mediating the depolarization of excitable membranes. Navs, also called VGSCs (voltage-gated sodium channels) or VDSCs (voltage-dependent sodium channels), operate by switching between closed and open conformations depending on the voltage difference across the membrane. In the open conformation they allow Na(+) ions to selectively pass through the pore, along their electrochemical gradient. The influx of Na+ ions provokes membrane depolarization, initiating the propagation of electrical signals throughout cells and tissues. The accessory beta subunits participate in localization and functional modulation of the Nav channels. Modulates the activity of SCN2A/Nav1.2, causing a hyperpolarizing shift in the voltage-dependence of inactivation of the channel and increasing the fraction of channels operating in the fast gating mode. Modulates the activity of SCN5A/Nav1.5. Could also regulate the atypical sodium channel SCN7A/Nav2.1. Modulates the activity of SCN10A/Nav1.8, regulating its oligomerization and accelerating the recovery from inactivation. In Mus musculus (Mouse), this protein is Sodium channel regulatory subunit beta-3.